The primary structure comprises 248 residues: 4-hydroxy-tetrahydrodipicolinate reductase (248 aa).

Residues 9-14 (GAKGRV), 77-79 (GTT), and 104-107 (APNF) each bind NAD(+). Residue His134 is the Proton donor/acceptor of the active site. His135 serves as a coordination point for (S)-2,3,4,5-tetrahydrodipicolinate. Lys138 functions as the Proton donor in the catalytic mechanism. A (S)-2,3,4,5-tetrahydrodipicolinate-binding site is contributed by 144-145 (GT).

The protein belongs to the DapB family.

It localises to the cytoplasm. It carries out the reaction (S)-2,3,4,5-tetrahydrodipicolinate + NAD(+) + H2O = (2S,4S)-4-hydroxy-2,3,4,5-tetrahydrodipicolinate + NADH + H(+). The catalysed reaction is (S)-2,3,4,5-tetrahydrodipicolinate + NADP(+) + H2O = (2S,4S)-4-hydroxy-2,3,4,5-tetrahydrodipicolinate + NADPH + H(+). The protein operates within amino-acid biosynthesis; L-lysine biosynthesis via DAP pathway; (S)-tetrahydrodipicolinate from L-aspartate: step 4/4. Its function is as follows. Catalyzes the conversion of 4-hydroxy-tetrahydrodipicolinate (HTPA) to tetrahydrodipicolinate. The sequence is that of 4-hydroxy-tetrahydrodipicolinate reductase from Corynebacterium glutamicum (strain R).